The primary structure comprises 144 residues: Protein WAP-3 (144 aa).

A signal peptide spans 1–21; sequence MRSRSFLVLVAVFLICETLVA. Residues 28 to 49 are disordered; it reads RGPKGQGQDPVEGQDQDEGQGP. Glycine 34 is a region of interest (8 X 6 AA approximate tandem repeats). 8 consecutive repeat copies span residues 34–39, 40–45, 46–51, 58–63, 64–69, 70–75, 76–81, and 82–87. Residues 64 to 85 form a disordered region; the sequence is GQDPVEGQDPVKAQLPDKVQDP. One can recognise a WAP domain in the interval 97-144; the sequence is LFPKPGVCPKIIFCPLVNPPIKCWRDSHCPGVKKCCPSLCGKGCVTPR. Cystine bridges form between cysteine 104-cysteine 132, cysteine 110-cysteine 136, cysteine 119-cysteine 131, and cysteine 125-cysteine 140.

Large intestine (relatively low levels).

The sequence is that of Protein WAP-3 from Sus scrofa (Pig).